A 330-amino-acid polypeptide reads, in one-letter code: Virulence plasmid integrase pGP8-D (330 aa).

The region spanning 39-124 (FSLFEVIMHW…SYISLTRFLN (86 aa)) is the Core-binding (CB) domain. Positions 152–327 (VKTDAMNSLQ…SREDNASKKM (176 aa)) constitute a Tyr recombinase domain. Catalysis depends on residues Arg189, Lys214, His279, Arg282, and His305. Residue Tyr314 is the O-(3'-phospho-DNA)-tyrosine intermediate of the active site.

It belongs to the 'phage' integrase family.

This is Virulence plasmid integrase pGP8-D from Chlamydia trachomatis serovar L2 (strain ATCC VR-902B / DSM 19102 / 434/Bu).